The primary structure comprises 176 residues: Large ribosomal subunit protein uL10 (176 aa).

The protein belongs to the universal ribosomal protein uL10 family. As to quaternary structure, part of the ribosomal stalk of the 50S ribosomal subunit. The N-terminus interacts with L11 and the large rRNA to form the base of the stalk. The C-terminus forms an elongated spine to which L12 dimers bind in a sequential fashion forming a multimeric L10(L12)X complex.

Functionally, forms part of the ribosomal stalk, playing a central role in the interaction of the ribosome with GTP-bound translation factors. This Natranaerobius thermophilus (strain ATCC BAA-1301 / DSM 18059 / JW/NM-WN-LF) protein is Large ribosomal subunit protein uL10.